The chain runs to 228 residues: Ribulose-phosphate 3-epimerase-like protein 1 (228 aa).

Ser10 contacts substrate. His35, Asp37, and His70 together coordinate a divalent metal cation. Asp37 (proton acceptor) is an active-site residue. Residues His70, 146 to 149 (GFGE), 175 to 177 (DGG), and 197 to 198 (GS) contribute to the substrate site. Asp175 is an a divalent metal cation binding site. Catalysis depends on Asp175, which acts as the Proton donor.

Belongs to the ribulose-phosphate 3-epimerase family. In terms of assembly, homodimer. Requires Fe(2+) as cofactor. Mn(2+) is required as a cofactor. The cofactor is Zn(2+). It depends on Co(2+) as a cofactor.

The catalysed reaction is D-ribulose 5-phosphate = D-xylulose 5-phosphate. It functions in the pathway carbohydrate degradation. Its function is as follows. Catalyzes the reversible epimerization of D-ribulose 5-phosphate to D-xylulose 5-phosphate. This is Ribulose-phosphate 3-epimerase-like protein 1 (RPEL1) from Homo sapiens (Human).